The sequence spans 487 residues: 2-aminomuconic semialdehyde dehydrogenase (487 aa).

Residue 231-236 (GSTATA) coordinates NAD(+). Residue glutamate 253 is the Proton acceptor of the active site. Cysteine 287 serves as the catalytic Nucleophile.

This sequence belongs to the aldehyde dehydrogenase family.

It localises to the cytoplasm. The catalysed reaction is 2-aminomuconate 6-semialdehyde + NAD(+) + H2O = (2Z,4E)-2-aminomuconate + NADH + 2 H(+). It participates in amino-acid degradation; L-kynurenine degradation. In terms of biological role, catalyzes the NAD-dependent oxidation of 2-aminomuconic semialdehyde of the kynurenine metabolic pathway in L-tryptophan degradation. In Danio rerio (Zebrafish), this protein is 2-aminomuconic semialdehyde dehydrogenase (aldh8a1).